A 1009-amino-acid chain; its full sequence is C2 domain-containing protein aex-1 (1009 aa).

Residues 812–945 (NAPHVDVHIS…ASEEKPTQRL (134 aa)) form the C2 domain.

The protein belongs to the unc-13 family. In terms of tissue distribution, expressed in intestine, body wall muscles and some amphid neurons.

In terms of biological role, involved in retrograde signaling from post-synaptic cells to pre-synaptic neurons, probably by regulating vesicle exocytosis in post-synaptic cells. Acts in muscles, to regulate the localization of synaptic vesicle fusion protein unc-13 likely during vesicle exocytosis and thus regulate retrograde signaling at the neuromuscular junction (NMJ). Regulates anterior body muscle contractions (aBOC) and the expulsion steps during the defecation motor program (DMP). Probably by regulating DMP, plays a homeostatic role in the uptake of triglycerides. Regulates locomotion. In Caenorhabditis elegans, this protein is C2 domain-containing protein aex-1.